An 828-amino-acid polypeptide reads, in one-letter code: Leucine--tRNA ligase (828 aa).

Positions 36 to 46 match the 'HIGH' region motif; the sequence is PYPSGKIHIGH. Positions 595 to 599 match the 'KMSKS' region motif; that stretch reads KMSKS. Position 598 (K598) interacts with ATP.

It belongs to the class-I aminoacyl-tRNA synthetase family.

It is found in the cytoplasm. It carries out the reaction tRNA(Leu) + L-leucine + ATP = L-leucyl-tRNA(Leu) + AMP + diphosphate. This chain is Leucine--tRNA ligase, found in Rickettsia prowazekii (strain Madrid E).